A 193-amino-acid polypeptide reads, in one-letter code: 21 kDa protein (193 aa).

Residues 1-22 form the signal peptide; the sequence is MKLSKSTLVFSALLVILAAASA.

The protein is 21 kDa protein of Daucus carota (Wild carrot).